Consider the following 260-residue polypeptide: Apolipoprotein A-I (260 aa).

A signal peptide spans 1–18 (MKFAALALALLLAVGSHA). The segment at 32-63 (ARAVLDVYLTQVKDMSLRAVNQLDDPQYAEFK) is 3 X approximate tandem repeats. 2 repeat units span residues 64–85 (TNLA…GSVS) and 87–107 (MTDS…ESLN). Positions 64 to 260 (TNLAQRIEEM…EIIAASVTKS (197 aa)) are 10 X approximate tandem repeats. The 3; half-length repeat unit spans residues 108–118 (VDLEALKSSLA). A run of 5 repeats spans residues 119–140 (PQNE…TLLT), 141–162 (PIYN…TRLE), 163–184 (PVME…AVLM), 185–206 (PMVE…EVVQ), and 207–225 (PYVQ…QAQT). One copy of the 9; half-length repeat lies at 226–236 (VDTDALRTKIT). The stretch at 237-260 (PLVEEIKVKMNAIFEIIAASVTKS) is repeat 10.

Belongs to the apolipoprotein A1/A4/E family. In terms of tissue distribution, strong expression in liver with lower expression in intestine.

The protein localises to the secreted. Its function is as follows. Participates in the reverse transport of cholesterol from tissues to the liver for excretion by promoting cholesterol efflux from tissues and by acting as a cofactor for the lecithin cholesterol acyltransferase (LCAT). In Sparus aurata (Gilthead sea bream), this protein is Apolipoprotein A-I (apoa1).